A 300-amino-acid polypeptide reads, in one-letter code: 4-hydroxy-tetrahydrodipicolinate synthase (300 aa).

Residue Thr-45 coordinates pyruvate. Tyr-140 serves as the catalytic Proton donor/acceptor. Lys-169 (schiff-base intermediate with substrate) is an active-site residue. Residue Ile-210 coordinates pyruvate.

This sequence belongs to the DapA family. In terms of assembly, homotetramer; dimer of dimers.

It localises to the cytoplasm. The enzyme catalyses L-aspartate 4-semialdehyde + pyruvate = (2S,4S)-4-hydroxy-2,3,4,5-tetrahydrodipicolinate + H2O + H(+). It participates in amino-acid biosynthesis; L-lysine biosynthesis via DAP pathway; (S)-tetrahydrodipicolinate from L-aspartate: step 3/4. Its function is as follows. Catalyzes the condensation of (S)-aspartate-beta-semialdehyde [(S)-ASA] and pyruvate to 4-hydroxy-tetrahydrodipicolinate (HTPA). This Helicobacter pylori (strain G27) protein is 4-hydroxy-tetrahydrodipicolinate synthase.